Reading from the N-terminus, the 171-residue chain is ATP synthase subunit b (171 aa).

A helical transmembrane segment spans residues Leu-26–Leu-48.

This sequence belongs to the ATPase B chain family. In terms of assembly, F-type ATPases have 2 components, F(1) - the catalytic core - and F(0) - the membrane proton channel. F(1) has five subunits: alpha(3), beta(3), gamma(1), delta(1), epsilon(1). F(0) has four main subunits: a(1), b(1), b'(1) and c(10-14). The alpha and beta chains form an alternating ring which encloses part of the gamma chain. F(1) is attached to F(0) by a central stalk formed by the gamma and epsilon chains, while a peripheral stalk is formed by the delta, b and b' chains.

Its subcellular location is the cellular thylakoid membrane. F(1)F(0) ATP synthase produces ATP from ADP in the presence of a proton or sodium gradient. F-type ATPases consist of two structural domains, F(1) containing the extramembraneous catalytic core and F(0) containing the membrane proton channel, linked together by a central stalk and a peripheral stalk. During catalysis, ATP synthesis in the catalytic domain of F(1) is coupled via a rotary mechanism of the central stalk subunits to proton translocation. Functionally, component of the F(0) channel, it forms part of the peripheral stalk, linking F(1) to F(0). The protein is ATP synthase subunit b of Synechococcus elongatus (strain ATCC 33912 / PCC 7942 / FACHB-805) (Anacystis nidulans R2).